Consider the following 361-residue polypeptide: Nuclear pore complex protein NUP43 (361 aa).

The disordered stretch occupies residues I51–S73. WD repeat units follow at residues F132–V173, N177–S215, and K225–V265.

Part of the nuclear pore complex (NPC). The NPC has an eight-fold symmetrical structure comprising a central transport channel and two rings, the cytoplasmic and nuclear rings, to which eight filaments are attached. The cytoplasmic filaments have loose ends, while the nuclear filaments are joined in a distal ring, forming a nuclear basket. NPCs are highly dynamic in configuration and composition, and can be devided in 3 subcomplexes, the NUP62 subcomplex, the NUP107-160 subcomplex and the NUP93 subcomplex, containing approximately 30 different nucleoporin proteins.

The protein localises to the nucleus envelope. It is found in the nucleus. It localises to the nuclear pore complex. The polypeptide is Nuclear pore complex protein NUP43 (Arabidopsis thaliana (Mouse-ear cress)).